The sequence spans 837 residues: Protein translocase subunit SecA (837 aa).

ATP contacts are provided by residues glutamine 85, 103-107 (GEGKT), and aspartate 493. 4 residues coordinate Zn(2+): cysteine 821, cysteine 823, cysteine 832, and histidine 833.

It belongs to the SecA family. As to quaternary structure, monomer and homodimer. Part of the essential Sec protein translocation apparatus which comprises SecA, SecYEG and auxiliary proteins SecDF. Other proteins may also be involved. The cofactor is Zn(2+).

It localises to the cell membrane. The protein resides in the cytoplasm. It catalyses the reaction ATP + H2O + cellular proteinSide 1 = ADP + phosphate + cellular proteinSide 2.. Functionally, part of the Sec protein translocase complex. Interacts with the SecYEG preprotein conducting channel. Has a central role in coupling the hydrolysis of ATP to the transfer of proteins into and across the cell membrane, serving as an ATP-driven molecular motor driving the stepwise translocation of polypeptide chains across the membrane. The sequence is that of Protein translocase subunit SecA from Streptococcus pneumoniae (strain Taiwan19F-14).